A 111-amino-acid chain; its full sequence is Holo-[acyl-carrier-protein] synthase (111 aa).

The Mg(2+) site is built by aspartate 8 and glutamate 57.

It belongs to the P-Pant transferase superfamily. AcpS family. Requires Mg(2+) as cofactor.

The protein resides in the cytoplasm. It catalyses the reaction apo-[ACP] + CoA = holo-[ACP] + adenosine 3',5'-bisphosphate + H(+). Functionally, transfers the 4'-phosphopantetheine moiety from coenzyme A to a Ser of acyl-carrier-protein. The protein is Holo-[acyl-carrier-protein] synthase of Mycoplasmoides gallisepticum (strain R(low / passage 15 / clone 2)) (Mycoplasma gallisepticum).